Consider the following 1386-residue polypeptide: DNA-directed RNA polymerase subunit beta (1386 aa).

The protein belongs to the RNA polymerase beta chain family. In terms of assembly, in plastids the minimal PEP RNA polymerase catalytic core is composed of four subunits: alpha, beta, beta', and beta''. When a (nuclear-encoded) sigma factor is associated with the core the holoenzyme is formed, which can initiate transcription.

It is found in the plastid. The protein localises to the chloroplast. The enzyme catalyses RNA(n) + a ribonucleoside 5'-triphosphate = RNA(n+1) + diphosphate. In terms of biological role, DNA-dependent RNA polymerase catalyzes the transcription of DNA into RNA using the four ribonucleoside triphosphates as substrates. The chain is DNA-directed RNA polymerase subunit beta from Thalassiosira pseudonana (Marine diatom).